The following is a 516-amino-acid chain: Nucleolar complex protein 4 homolog (516 aa).

Transmembrane regions (helical) follow at residues 296 to 316 (SACD…FILI), 347 to 367 (FFHL…LVAA), and 375 to 395 (LALT…CNLL).

This sequence belongs to the CBF/MAK21 family.

It is found in the nucleus membrane. Its subcellular location is the nucleus. The protein resides in the nucleolus. This chain is Nucleolar complex protein 4 homolog (Noc4l), found in Rattus norvegicus (Rat).